The primary structure comprises 77 residues: RNA-binding protein Hfq (77 aa).

Positions 9–69 (DQFLNQLRKE…ISTFAPQKNV (61 aa)) constitute a Sm domain.

It belongs to the Hfq family. As to quaternary structure, homohexamer.

RNA chaperone that binds small regulatory RNA (sRNAs) and mRNAs to facilitate mRNA translational regulation in response to envelope stress, environmental stress and changes in metabolite concentrations. Also binds with high specificity to tRNAs. The chain is RNA-binding protein Hfq from Shouchella clausii (strain KSM-K16) (Alkalihalobacillus clausii).